The following is a 392-amino-acid chain: G2/mitotic-specific cyclin-B2 (392 aa).

It belongs to the cyclin family. Cyclin AB subfamily. Interacts with the CDK1 protein kinase to form a serine/threonine kinase holoenzyme complex also known as maturation promoting factor (MPF). The cyclin subunit imparts substrate specificity to the complex.

Its function is as follows. Essential for the control of the cell cycle at the G2/M (mitosis) transition. In Rana japonica (Japanese reddish frog), this protein is G2/mitotic-specific cyclin-B2 (CCNB2).